We begin with the raw amino-acid sequence, 234 residues long: MAVVSLSEMMEAGAHFGHQTRRWNPKMSKYIYCARNGVHIIDLVKTALCMNNAYKWTRNAAKSGKRFLFVGTKKQASDVVAQEATRCGAAYVNQRWLGGMLTNWTTMKARIERLKDLERMESSGSIAMRPKKEAAVLRRELERLQKYLGGLKGMRRLPDVVVLVDQRRESNAVLEARKLDISLVSMLDTNCDPDLCEVPIPCNDDAVRSVQLILGRLADAINEGRKGSNAERKN.

It belongs to the universal ribosomal protein uS2 family.

The protein is Small ribosomal subunit protein uS2 of Prochlorococcus marinus (strain AS9601).